A 257-amino-acid polypeptide reads, in one-letter code: Putative pentatricopeptide repeat-containing protein At1g43010 (257 aa).

PPR repeat units follow at residues 133-168 (KMRDYSVLLSSYTKPVRTVDKAEATFKKMRELGFLL) and 169-203 (KPYLFNSMICLYGQLQRLDMVEKLLYKLKKNNMEV).

Belongs to the PPR family. P subfamily.

The sequence is that of Putative pentatricopeptide repeat-containing protein At1g43010 from Arabidopsis thaliana (Mouse-ear cress).